The primary structure comprises 39 residues: Photosystem II reaction center protein L (39 aa).

The helical transmembrane segment at 18-38 (SLYLGLLLIAVLGILFSSYFF) threads the bilayer.

This sequence belongs to the PsbL family. PSII is composed of 1 copy each of membrane proteins PsbA, PsbB, PsbC, PsbD, PsbE, PsbF, PsbH, PsbI, PsbJ, PsbK, PsbL, PsbM, PsbT, PsbX, PsbY, PsbZ, Psb30/Ycf12, peripheral proteins PsbO, CyanoQ (PsbQ), PsbU, PsbV and a large number of cofactors. It forms dimeric complexes.

It localises to the cellular thylakoid membrane. Functionally, one of the components of the core complex of photosystem II (PSII). PSII is a light-driven water:plastoquinone oxidoreductase that uses light energy to abstract electrons from H(2)O, generating O(2) and a proton gradient subsequently used for ATP formation. It consists of a core antenna complex that captures photons, and an electron transfer chain that converts photonic excitation into a charge separation. This subunit is found at the monomer-monomer interface and is required for correct PSII assembly and/or dimerization. The sequence is that of Photosystem II reaction center protein L from Crocosphaera subtropica (strain ATCC 51142 / BH68) (Cyanothece sp. (strain ATCC 51142)).